Consider the following 83-residue polypeptide: MANHQSARKRIRANEAKHLHNRYQLKTCRTAIKQLKQVKDKEQAVTLFKTVVAMLDKSAKRHIIHKNKAANTKSKLAQHINRL.

It belongs to the bacterial ribosomal protein bS20 family.

Its function is as follows. Binds directly to 16S ribosomal RNA. This is Small ribosomal subunit protein bS20 from Amoebophilus asiaticus (strain 5a2).